The chain runs to 389 residues: Indole-3-acetate monooxygenase (389 aa).

Belongs to the HpaH/HsaA monooxygenase family.

The catalysed reaction is (indol-3-yl)acetate + NADH + O2 + H(+) = 2-hydroxy-(1H-indol-3-yl)acetate + NAD(+) + H2O. It carries out the reaction indole + NADH + O2 + H(+) = indoxyl + NAD(+) + H2O. In terms of biological role, involved in the degradation of the plant hormone indole-3-acetic acid (IAA). Catalyzes the first step of the pathway, the conversion of IAA to 2-hydroxy-IAA (2-OH-IAA). Can also convert indole to indoxyl, which spontaneously dimerizes in the presence of oxygen to form the blue pigment indigo. This Acinetobacter baumannii (strain ATCC 19606 / DSM 30007 / JCM 6841 / CCUG 19606 / CIP 70.34 / NBRC 109757 / NCIMB 12457 / NCTC 12156 / 81) protein is Indole-3-acetate monooxygenase.